Consider the following 388-residue polypeptide: MMMPHLSEDLVEEILSRVPAISLKRLRYTCKQWNALFNDQRFSKKHRDKAPKTYLGLTLKDFRIYSMSSNLHGLLHNNNIDLLMEFKGKLSSLNDLNDFEISQIYPCDGLILCSTKRNTRLVVWNPCTGQTRWIKRRNRRMCDTFAFGYDNSKSSCLNNYKILRVCEKIKGQQFEYEIFEFSSNSWRVLDVNPNCIIEGRSVSVKGNSYWFATITKTHYFIRRFDFSSETFQKLPLPFHIFDYNDSRALSAFREEQLSVLHQSFDTEKMDIWVTNKIDETTDWSWSKFFTVRLINRLDYPISMMMKSPLSFFIDEKKNIILCYDKHRENTYKSLVLIVGKDKVYREFYFPESYELGRTYLCNYVPSLVQIKQSGLISTRKRKRKDFSS.

An F-box domain is found at 1 to 46; sequence MMMPHLSEDLVEEILSRVPAISLKRLRYTCKQWNALFNDQRFSKKH.

The polypeptide is Putative F-box protein At3g17490 (Arabidopsis thaliana (Mouse-ear cress)).